Here is a 636-residue protein sequence, read N- to C-terminus: Tumor protein p73 (636 aa).

Residues 1–46 are transactivation; that stretch reads MAQSTATSPDGGTTFEHLWSSLEPDSTYFDLPQSSRGNNEVVGGTD. The residue at position 27 (Thr27) is a Phosphothreonine; by PLK1. At Tyr28 the chain carries Phosphotyrosine; by SRC and HCK. Residues 78–104 form a disordered region; it reads RAASASPYTPEHAASVPTHSPYAQPSS. Residues 94 to 104 show a composition bias toward polar residues; the sequence is PTHSPYAQPSS. Tyr99 carries the phosphotyrosine; by ABL1 modification. The segment at 131-310 is DNA-binding; the sequence is FQQSSTAKSA…DRKADEDHYR (180 aa). Zn(2+) is bound by residues Cys194, His197, Cys258, and Cys262. The tract at residues 314 to 345 is disordered; that stretch reads ALNESSAKNGAASKRAFKQSPPAVPALGAGVK. The segment at 345-380 is interaction with HIPK2; that stretch reads KKRRHGDEDTYYLQVRGRENFEILMKLKESLELMEL. The interval 345–386 is oligomerization; sequence KKRRHGDEDTYYLQVRGRENFEILMKLKESLELMELVPQPLV. A PPxY motif motif is present at residues 483 to 487; sequence PPPPY. Residues 485–551 form the SAM domain; the sequence is PPYHADPSLV…WRGLQDLKQG (67 aa). Residue Lys627 forms a Glycyl lysine isopeptide (Lys-Gly) (interchain with G-Cter in SUMO); in isoform Alpha linkage. A Glycyl lysine isopeptide (Lys-Gly) (interchain with G-Cter in SUMO2) cross-link involves residue Lys627.

This sequence belongs to the p53 family. Found in a complex with p53/TP53 and CABLES1. The C-terminal oligomerization domain binds to the ABL1 tyrosine kinase SH3 domain. Interacts with HECW2. Isoform Beta interacts homotypically and with p53/TP53, whereas isoform Alpha does not. Isoform Gamma interacts homotypically and with all p73 isoforms. Isoform Delta interacts with isoform Gamma, isoform Alpha, and homotypically. Isoforms Alpha and Beta interact with HIPK2. Isoform Alpha interacts with RANBP9. Isoform Beta interacts with WWOX. Interacts (via SAM domain) with FBXO45 (via B30.2/SPRY domain). Interacts with YAP1 (phosphorylated form). Interacts with HCK (via SH3 domain); this inhibits TP73 activity and degradation. Interacts (via SAM domain) with NQO1; this interaction is NADH-dependent, stabilizes TP73 in response to oxidative stress and protects it from ubiquitin-independent degradation by the 20S proteasome. As to quaternary structure, (Microbial infection) Interacts with Epstein-Barr virus protein EBNA6; this interaction inhibits TP73-mediated apoptotic pathway. Requires Zn(2+) as cofactor. Post-translationally, isoform alpha (but not isoform beta) is sumoylated on Lys-627, which potentiates proteasomal degradation but does not affect transcriptional activity. Phosphorylation by PLK1 and PLK3 inhibits the transcription regulator activity and pro-apoptotic function. Higher levels of phosphorylation seen in the brain from patients with Huntington disease. In terms of processing, polyubiquitinated by RCHY1/PIRH2; leading to its degradation by the proteasome. In terms of tissue distribution, expressed in striatal neurons of patients with Huntington disease (at protein level). Brain, kidney, placenta, colon, heart, liver, spleen, skeletal muscle, prostate, thymus and pancreas. Highly expressed in fetal tissue. Expressed in the respiratory epithelium.

The protein localises to the nucleus. It localises to the cytoplasm. Functionally, participates in the apoptotic response to DNA damage. Isoforms containing the transactivation domain are pro-apoptotic, isoforms lacking the domain are anti-apoptotic and block the function of p53 and transactivating p73 isoforms. May be a tumor suppressor protein. Is an activator of FOXJ1 expression. It is an essential factor for the positive regulation of lung ciliated cell differentiation. The chain is Tumor protein p73 (TP73) from Homo sapiens (Human).